We begin with the raw amino-acid sequence, 188 residues long: MSHAPANRPFDPAEYINSEIRTVPDWPQAGVQFRDITPLLQKPKSLRVLIDLFVQRYIDQKLDYVAGLDARGFIIGPILAYELNLGFIPIRKIGKLPFRTVSESYELEYGSATVEIHEDACKPGDRVVIVDDLIATGGTMMAGKKLLERLGATVIEGAAIVDLPDLGGSKLLRGAGLPLFTVTSFGGH.

It belongs to the purine/pyrimidine phosphoribosyltransferase family. As to quaternary structure, homodimer.

It is found in the cytoplasm. It carries out the reaction AMP + diphosphate = 5-phospho-alpha-D-ribose 1-diphosphate + adenine. It participates in purine metabolism; AMP biosynthesis via salvage pathway; AMP from adenine: step 1/1. Catalyzes a salvage reaction resulting in the formation of AMP, that is energically less costly than de novo synthesis. The sequence is that of Adenine phosphoribosyltransferase from Paraburkholderia phymatum (strain DSM 17167 / CIP 108236 / LMG 21445 / STM815) (Burkholderia phymatum).